Reading from the N-terminus, the 122-residue chain is Phycocyanin PC645 alpha-2 subunit (122 aa).

(2R,3E)-phycocyanobilin-binding residues include D54 and R68. Mesobiliverdin is bound by residues C70, K76, E77, and C92.

This sequence belongs to the phycoerythrin family. In terms of assembly, heterotetramer of 2 different alpha chains and 2 identical beta chains which form 2 alpha-beta heterodimers within the heterotetramer. Post-translationally, contains two phycocyanobilin chromophores and one mesobiliverdin chromophore with binding mediated by both the alpha and beta subunits.

The protein resides in the plastid. It is found in the chloroplast thylakoid membrane. Light-harvesting photosynthetic tetrapyrrole chromophore-protein from the phycobiliprotein complex. The polypeptide is Phycocyanin PC645 alpha-2 subunit (Chroomonas sp. (strain CCMP270)).